The primary structure comprises 732 residues: Probable ATP-dependent RNA helicase DHX35 homolog (732 aa).

A disordered region spans residues 1 to 50; that stretch reads MSYHPGHGHRQEPRKGAGARRGFARPDDSADAPRTGPLIFEERSTENAGA. The 165-residue stretch at 87–251 folds into the Helicase ATP-binding domain; it reads LYMCERYRTI…FEMNETGNSD (165 aa). 100–107 contacts ATP; the sequence is GETGCGKS. The DEAH box signature appears at 198–201; the sequence is DEAH. Residues 283-457 form the Helicase C-terminal domain; it reads AVDTVINIHK…STILQLKALG (175 aa).

It belongs to the DEAD box helicase family. DEAH subfamily.

The enzyme catalyses ATP + H2O = ADP + phosphate + H(+). This chain is Probable ATP-dependent RNA helicase DHX35 homolog, found in Caenorhabditis elegans.